Here is a 422-residue protein sequence, read N- to C-terminus: 2,3-bisphosphoglycerate-independent phosphoglycerate mutase (422 aa).

Residues 173–194 are disordered; sequence DADPKRVGKPVKDVKPTSDDPA. Residues 174-190 are compositionally biased toward basic and acidic residues; sequence ADPKRVGKPVKDVKPTS.

This sequence belongs to the BPG-independent phosphoglycerate mutase family. A-PGAM subfamily.

The enzyme catalyses (2R)-2-phosphoglycerate = (2R)-3-phosphoglycerate. It functions in the pathway carbohydrate degradation; glycolysis; pyruvate from D-glyceraldehyde 3-phosphate: step 3/5. Catalyzes the interconversion of 2-phosphoglycerate and 3-phosphoglycerate. The chain is 2,3-bisphosphoglycerate-independent phosphoglycerate mutase from Methanopyrus kandleri (strain AV19 / DSM 6324 / JCM 9639 / NBRC 100938).